The sequence spans 422 residues: Tryptophan synthase beta chain (422 aa).

At K87 the chain carries N6-(pyridoxal phosphate)lysine.

The protein belongs to the TrpB family. In terms of assembly, tetramer of two alpha and two beta chains. The cofactor is pyridoxal 5'-phosphate.

It carries out the reaction (1S,2R)-1-C-(indol-3-yl)glycerol 3-phosphate + L-serine = D-glyceraldehyde 3-phosphate + L-tryptophan + H2O. Its pathway is amino-acid biosynthesis; L-tryptophan biosynthesis; L-tryptophan from chorismate: step 5/5. Its function is as follows. The beta subunit is responsible for the synthesis of L-tryptophan from indole and L-serine. The sequence is that of Tryptophan synthase beta chain (trpB) from Haloferax volcanii (strain ATCC 29605 / DSM 3757 / JCM 8879 / NBRC 14742 / NCIMB 2012 / VKM B-1768 / DS2) (Halobacterium volcanii).